A 193-amino-acid chain; its full sequence is Corrinoid adenosyltransferase (193 aa).

ATP-binding positions include 10-18 (TRTGDDGTT), Lys-28, 137-142 (RRAERS), and Asn-163.

It belongs to the Cob(I)alamin adenosyltransferase family.

It localises to the cytoplasm. The enzyme catalyses 2 cob(II)yrinate a,c diamide + reduced [electron-transfer flavoprotein] + 2 ATP = 2 adenosylcob(III)yrinate a,c-diamide + 2 triphosphate + oxidized [electron-transfer flavoprotein] + 3 H(+). The catalysed reaction is 2 cob(II)alamin + reduced [electron-transfer flavoprotein] + 2 ATP = 2 adenosylcob(III)alamin + 2 triphosphate + oxidized [electron-transfer flavoprotein] + 3 H(+). Its pathway is cofactor biosynthesis; adenosylcobalamin biosynthesis; adenosylcobalamin from cob(II)yrinate a,c-diamide: step 2/7. In Mycobacterium bovis (strain ATCC BAA-935 / AF2122/97), this protein is Corrinoid adenosyltransferase.